A 251-amino-acid chain; its full sequence is uncharacterized protein (251 aa).

An N-acetyltransferase domain is found at Ile-4–Asn-152.

This sequence belongs to the acetyltransferase family.

This is an uncharacterized protein from Bacillus subtilis (strain 168).